A 115-amino-acid chain; its full sequence is Toxin-like structure LSTX-R1 (115 aa).

Positions 1–18 are cleaved as a signal peptide; it reads MKLSLIIIATSLVIAVVA. Positions 19-51 are excised as a propeptide; the sequence is FPSKDSAATDFDKTESLENVEERVETALDERPR.

It belongs to the neurotoxin 25 family. F7 subfamily. In terms of processing, contains 4 disulfide bonds. In terms of tissue distribution, expressed by the venom gland.

The protein localises to the secreted. In Lycosa singoriensis (Wolf spider), this protein is Toxin-like structure LSTX-R1.